We begin with the raw amino-acid sequence, 241 residues long: Capsid protein (241 aa).

Residues 1 to 26 (MSPASSWKRKRPSSSSAQASKKRRVY) carry the Bipartite nuclear localization signal motif. The segment at 1–30 (MSPASSWKRKRPSSSSAQASKKRRVYRPAV) is disordered.

This sequence belongs to the geminiviridae capsid protein family. As to quaternary structure, homomultimer. Interacts with the movement protein. Binds to single-stranded and double-stranded viral DNA.

It localises to the virion. It is found in the host nucleus. Functionally, encapsidates the viral genome into characteristic twinned ('geminate') particles. Binds the genomic viral ssDNA and shuttles it into and out of the cell nucleus. Plays a role in protection of the genome from degradation, virus acquisition and transmission by insect vectors, infectivity, and systemic movement. The CP of monopartite geminiviruses is absolutely essential for virus movement. The sequence is that of Capsid protein from Avena sativa (Oat).